A 248-amino-acid polypeptide reads, in one-letter code: Granzyme C (248 aa).

An N-terminal signal peptide occupies residues 1–18 (MPPVLILLTLLLPLRAGA). Positions 19–20 (EE) are excised as a propeptide. Residues 21 to 246 (IIGGNEISPH…FVSWIKKTMK (226 aa)) enclose the Peptidase S1 domain. Cysteines 50 and 66 form a disulfide. Active-site charge relay system residues include histidine 65 and aspartate 109. Disulfide bonds link cysteine 143-cysteine 210 and cysteine 174-cysteine 189. Catalysis depends on serine 204, which acts as the Charge relay system.

This sequence belongs to the peptidase S1 family. Granzyme subfamily.

The protein resides in the cytolytic granule. Functionally, this enzyme is probably necessary for target cell lysis in cell-mediated immune responses. This is Granzyme C (Gzmc) from Mus musculus (Mouse).